A 1046-amino-acid chain; its full sequence is DNA-directed RNA polymerase subunit beta' (1046 aa).

Mg(2+) contacts are provided by Asp383, Asp385, and Asp387. The Zn(2+) site is built by Cys752, Cys826, Cys833, and Cys836.

Belongs to the RNA polymerase beta' chain family. In terms of assembly, the RNAP catalytic core consists of 2 alpha, 1 beta, 1 beta' and 1 omega subunit. When a sigma factor is associated with the core the holoenzyme is formed, which can initiate transcription. Mg(2+) is required as a cofactor. Zn(2+) serves as cofactor.

It carries out the reaction RNA(n) + a ribonucleoside 5'-triphosphate = RNA(n+1) + diphosphate. Its function is as follows. DNA-dependent RNA polymerase catalyzes the transcription of DNA into RNA using the four ribonucleoside triphosphates as substrates. The polypeptide is DNA-directed RNA polymerase subunit beta' (Weissella hellenica).